Consider the following 373-residue polypeptide: Probable G-protein coupled receptor 173 (373 aa).

The Extracellular segment spans residues 1–26; sequence MANTTGEPEEVSGALSLPSASAYVKL. An N-linked (GlcNAc...) asparagine glycan is attached at asparagine 3. A helical transmembrane segment spans residues 27 to 47; sequence VLLGLIMCVSLAGNAILSLLV. The Cytoplasmic portion of the chain corresponds to 48–59; sequence LKERALHKAPYY. Residues 60–80 form a helical membrane-spanning segment; the sequence is FLLDLCLADGIRSAICFPFVL. At 81 to 97 the chain is on the extracellular side; sequence ASVRHGSSWTFSALSCK. Cysteine 96 and cysteine 174 are disulfide-bonded. A helical transmembrane segment spans residues 98–118; it reads IVAFMAVLFCFHAAFMLFCIS. At 119 to 139 the chain is on the cytoplasmic side; sequence VTRYMAIAHHRFYAKRMTLWT. A helical membrane pass occupies residues 140 to 160; the sequence is CAAVICMAWTLSVAMAFPPVF. Over 161–188 the chain is Extracellular; sequence DVGTYKFIREEDQCIFEHRYFKANDTLG. N-linked (GlcNAc...) asparagine glycosylation is present at asparagine 184. Residues 189 to 209 form a helical membrane-spanning segment; it reads FMLMLAVLMAATHAVYGKLLL. The Cytoplasmic portion of the chain corresponds to 210-287; sequence FEYRHRKMKP…VKGEKQLGRM (78 aa). Residues 288–308 form a helical membrane-spanning segment; the sequence is FYAITLLFLLLWSPYIVACYW. Topologically, residues 309–322 are extracellular; it reads RVFVKACAVPHRYL. A helical membrane pass occupies residues 323–343; that stretch reads ATAVWMSFAQAAVNPIVCFLL. Over 344-373 the chain is Cytoplasmic; the sequence is NKDLKKCLRTHAPCWGTGGAPAPREPYCVM.

This sequence belongs to the G-protein coupled receptor 1 family. In terms of tissue distribution, expressed in the ovary, specifically in granulosa cells of follicles that have passed the primary stage and in oocytes (at protein level). Expressed in preadipocytes.

It is found in the cell membrane. Its function is as follows. Is a receptor for the SMIM20 derived peptides Phoenixin-14 and Phoenixin-20. It mediates the Phoenixin-14 and Phoenixin-20 augmentation of gonadotropin-releasing hormone (GNRH) signaling in the hypothalamus and pituitary gland. In the ovary, it mediates the effects of Phoenixin-14 and Phoenixin-20 induced granulosa cell proliferation during follicular growth. This chain is Probable G-protein coupled receptor 173 (Gpr173), found in Mus musculus (Mouse).